The primary structure comprises 229 residues: MTPKLIVALDFDNQDNALQLVDKLDPNHCALKVGSELFTLLGPQFVKELVRREFKVFLDLKFHDIPNTVAKACHSAAELGVWMINVHAIGGLRMLQAARESLKTYGKDRPLLIAVTVLTSFEEGELASVGISNTLPEQATHLAMLAREAGLDGVVSSAHEVKIIKQKCGENFITVTPGIRLPNNLKDDQSRVMTPQQAIREGSDFLVIGRPITQASNPHEVVSALLRDL.

Residues Asp-10, Lys-32, 59 to 68 (DLKFHDIPNT), Thr-119, Arg-180, Gln-189, Gly-209, and Arg-210 contribute to the substrate site. The active-site Proton donor is Lys-61.

The protein belongs to the OMP decarboxylase family. Type 1 subfamily. As to quaternary structure, homodimer.

The enzyme catalyses orotidine 5'-phosphate + H(+) = UMP + CO2. It participates in pyrimidine metabolism; UMP biosynthesis via de novo pathway; UMP from orotate: step 2/2. Catalyzes the decarboxylation of orotidine 5'-monophosphate (OMP) to uridine 5'-monophosphate (UMP). The polypeptide is Orotidine 5'-phosphate decarboxylase (Legionella pneumophila (strain Paris)).